Reading from the N-terminus, the 429-residue chain is Probable E3 ubiquitin-protein ligase makorin-1 (429 aa).

3 consecutive C3H1-type zinc fingers follow at residues 18 to 45, 48 to 75, and 153 to 180; these read WTKH…HDLT, KPAA…HCKP, and ELRK…HGDV. Residues 181–208 form a makorin-type Cys-His region; that stretch reads CDMCGLQVLHPTDSSQRSEHTKACIEAH. The RING-type zinc-finger motif lies at 226 to 280; it reads CGVCMEVVFEKANPSERRFGILSNCSHCYCLKCIRKWRSAKQFESKIIKSCPECR. The C3H1-type 4 zinc-finger motif lies at 309 to 338; sequence GMGRKPCRYFDEGRGICPFGANCFYKHAFP. The segment at 343-362 is disordered; that stretch reads EEAQPQRRQTGSSSRNRNSR. Positions 348-358 are enriched in low complexity; sequence QRRQTGSSSRN.

The enzyme catalyses S-ubiquitinyl-[E2 ubiquitin-conjugating enzyme]-L-cysteine + [acceptor protein]-L-lysine = [E2 ubiquitin-conjugating enzyme]-L-cysteine + N(6)-ubiquitinyl-[acceptor protein]-L-lysine.. It participates in protein modification; protein ubiquitination. In terms of biological role, E3 ubiquitin ligase catalyzing the covalent attachment of ubiquitin moieties onto substrate proteins. The sequence is that of Probable E3 ubiquitin-protein ligase makorin-1 from Takifugu rubripes (Japanese pufferfish).